A 190-amino-acid polypeptide reads, in one-letter code: Crossover junction endodeoxyribonuclease RuvC (190 aa).

Catalysis depends on residues Asp-8, Glu-67, and Asp-139. Asp-8, Glu-67, and Asp-139 together coordinate Mg(2+).

This sequence belongs to the RuvC family. Homodimer which binds Holliday junction (HJ) DNA. The HJ becomes 2-fold symmetrical on binding to RuvC with unstacked arms; it has a different conformation from HJ DNA in complex with RuvA. In the full resolvosome a probable DNA-RuvA(4)-RuvB(12)-RuvC(2) complex forms which resolves the HJ. Requires Mg(2+) as cofactor.

It is found in the cytoplasm. It carries out the reaction Endonucleolytic cleavage at a junction such as a reciprocal single-stranded crossover between two homologous DNA duplexes (Holliday junction).. The RuvA-RuvB-RuvC complex processes Holliday junction (HJ) DNA during genetic recombination and DNA repair. Endonuclease that resolves HJ intermediates. Cleaves cruciform DNA by making single-stranded nicks across the HJ at symmetrical positions within the homologous arms, yielding a 5'-phosphate and a 3'-hydroxyl group; requires a central core of homology in the junction. The consensus cleavage sequence is 5'-(A/T)TT(C/G)-3'. Cleavage occurs on the 3'-side of the TT dinucleotide at the point of strand exchange. HJ branch migration catalyzed by RuvA-RuvB allows RuvC to scan DNA until it finds its consensus sequence, where it cleaves and resolves the cruciform DNA. In Actinobacillus succinogenes (strain ATCC 55618 / DSM 22257 / CCUG 43843 / 130Z), this protein is Crossover junction endodeoxyribonuclease RuvC.